The sequence spans 196 residues: Peptide deformylase (196 aa).

The Fe cation site is built by Cys-123 and His-166. The active site involves Glu-167. Position 170 (His-170) interacts with Fe cation.

It belongs to the polypeptide deformylase family. Fe(2+) serves as cofactor.

It catalyses the reaction N-terminal N-formyl-L-methionyl-[peptide] + H2O = N-terminal L-methionyl-[peptide] + formate. In terms of biological role, removes the formyl group from the N-terminal Met of newly synthesized proteins. Requires at least a dipeptide for an efficient rate of reaction. N-terminal L-methionine is a prerequisite for activity but the enzyme has broad specificity at other positions. The protein is Peptide deformylase of Lactococcus lactis subsp. lactis (strain IL1403) (Streptococcus lactis).